Reading from the N-terminus, the 174-residue chain is Gamma-crystallin D (174 aa).

2 Beta/gamma crystallin 'Greek key' domains span residues 2-40 and 41-83; these read GKIT…RVDS and GCWM…RLIP. Positions 84 to 87 are connecting peptide; the sequence is HSGS. 2 consecutive Beta/gamma crystallin 'Greek key' domains span residues 88–128 and 129–171; these read HRIR…NVLE and GSWV…RRVI.

The protein belongs to the beta/gamma-crystallin family. As to quaternary structure, monomer.

Crystallins are the dominant structural components of the vertebrate eye lens. This chain is Gamma-crystallin D (CRYGD), found in Homo sapiens (Human).